The sequence spans 147 residues: Hemoglobin subunit delta (147 aa).

Residues histidine 3–histidine 147 form the Globin domain. A Phosphoserine modification is found at serine 51. Residues histidine 64 and histidine 93 each coordinate heme b.

The protein belongs to the globin family. In terms of assembly, heterotetramer of two delta chains and two alpha chains. Red blood cells.

In Otolemur crassicaudatus (Brown greater galago), this protein is Hemoglobin subunit delta (HBD).